Reading from the N-terminus, the 743-residue chain is MDGPNFAHQGGRSQRTTELYSCARCRKLKKKCGKQIPTCANCDKNGAHCSYPGRAPRRTKKELADAMLRGEYVPVKRNKKVGKSPLSTKSMPNSSSPLSANGAITPGFSPYENDDAHKMKQLKPSDPINLVMGASPNSSEGVSSLISVLTSLNDNSNPSSHLSSNENSMIPSRSLPASVQQSSTTSSFGGYNTPSPLISSHVPANAQAVPLQNNNRNTSNGDNGSNVNHDNNNGSTNTPQLSLTPYANNSAPNGKFDSVPVDASSIEFETMSCCFKGGRTTSWVREDGSFKSIDRSLLDRFIAAYFKHNHRLFPMIDKIAFLNDAATITDFERLYDNKNYPDSFVFKVYMIMAIGCTTLQRAGMVSQDEECLSEHLAFLAMKKFRSVIILQDIETVRCLLLLGIYSFFEPKGSSSWTISGIIMRLTIGLGLNRELTAKKLKSMSALEAEARYRVFWSAYCFERLVCTSLGRISGIDDEDITVPLPRALYVDERDDLEMTKLMISLRKMGGRIYKQVHSVSAGRQKLTIEQKQEIISGLRKELDEIYSRESERRKLKKSQMDQVERENNSTTNVISFHSSEIWLAMRYSQLQILLYRPSALMPKPPIDSLSTLGEFCLQAWKHTYTLYKKRLLPLNWITLFRTLTICNTILYCLCQWSIDLIESKIEIQQCVEILRHFGERWIFAMRCADVFQNISNTILDISLSHGKVPNMDQLTRELFGASDSYQDILDENNVDVSWVDKLV.

A DNA-binding region (zn(2)-C6 fungal-type) is located at residues 22–49; that stretch reads CARCRKLKKKCGKQIPTCANCDKNGAHC. 2 disordered regions span residues 81 to 100 and 155 to 249; these read VGKS…PLSA and NSNP…YANN. 2 stretches are compositionally biased toward polar residues: residues 85–99 and 155–198; these read PLST…SPLS and NSNP…SPLI. Residues 213–238 show a composition bias toward low complexity; that stretch reads NNNRNTSNGDNGSNVNHDNNNGSTNT. A compositionally biased stretch (polar residues) spans 239 to 249; the sequence is PQLSLTPYANN.

The protein localises to the nucleus. Binds to SIN3. This is Protein STB5 (STB5) from Saccharomyces cerevisiae (strain ATCC 204508 / S288c) (Baker's yeast).